The sequence spans 262 residues: Snake venom serine protease (262 aa).

Residues 1–18 (MVLIRVLANLLILQLSYA) form the signal peptide. A propeptide spanning residues 19–24 (QKSSEL) is cleaved from the precursor. The region spanning 25-253 (VIGGDECNIN…YTEWIQSIIA (229 aa)) is the Peptidase S1 domain. 6 cysteine pairs are disulfide-bonded: Cys31–Cys167, Cys50–Cys66, Cys102–Cys260, Cys146–Cys214, Cys178–Cys193, and Cys204–Cys229. Residues His65 and Asp114 each act as charge relay system in the active site. Asn125 and Asn158 each carry an N-linked (GlcNAc...) asparagine glycan. Ser208 functions as the Charge relay system in the catalytic mechanism.

It belongs to the peptidase S1 family. Snake venom subfamily. In terms of assembly, monomer. As to expression, expressed by the venom gland.

It is found in the secreted. Its function is as follows. Snake venom serine protease that may act in the hemostasis system of the prey. The polypeptide is Snake venom serine protease (Crotalus durissus durissus (Central American rattlesnake)).